The following is a 557-amino-acid chain: Glucose-6-phosphate isomerase (557 aa).

Residue Glu359 is the Proton donor of the active site. Residues His390 and Lys518 contribute to the active site.

Belongs to the GPI family.

The protein resides in the cytoplasm. It carries out the reaction alpha-D-glucose 6-phosphate = beta-D-fructose 6-phosphate. It participates in carbohydrate biosynthesis; gluconeogenesis. The protein operates within carbohydrate degradation; glycolysis; D-glyceraldehyde 3-phosphate and glycerone phosphate from D-glucose: step 2/4. In terms of biological role, catalyzes the reversible isomerization of glucose-6-phosphate to fructose-6-phosphate. The sequence is that of Glucose-6-phosphate isomerase from Hahella chejuensis (strain KCTC 2396).